Consider the following 83-residue polypeptide: Small ribosomal subunit protein uS17 (83 aa).

It belongs to the universal ribosomal protein uS17 family. As to quaternary structure, part of the 30S ribosomal subunit.

Functionally, one of the primary rRNA binding proteins, it binds specifically to the 5'-end of 16S ribosomal RNA. In Gloeobacter violaceus (strain ATCC 29082 / PCC 7421), this protein is Small ribosomal subunit protein uS17.